The following is a 456-amino-acid chain: Maturase-like protein 1 (456 aa).

The protein to group II intron maturases.

It is found in the plastid. Functionally, could be required for group III intron excision. This is Maturase-like protein 1 (mat1) from Euglena longa (Euglenophycean alga).